The primary structure comprises 981 residues: Helicase-like transcription factor CHR28 (981 aa).

Disordered regions lie at residues 1–66 (MDSA…LDSR) and 112–194 (KRTH…RNSE). Positions 46-65 (SGSSSGANGHTKTGLTNLDS) are enriched in polar residues. Pro residues predominate over residues 119-128 (FSRPPFPPRP). Residues 166 to 176 (HGTSASPSHFN) show a composition bias toward polar residues. Basic and acidic residues predominate over residues 181–194 (PMHRNGIGEERNSE). Residues 241–526 (ETNSLHCMGG…YSYFRFLKYD (286 aa)) enclose the Helicase ATP-binding domain. 254–261 (DDQGLGKT) provides a ligand contact to ATP. 2 disordered regions span residues 293–337 (DADD…RKFN) and 439–462 (VVGT…SDPD). The segment covering 439–451 (VVGTTKKSKKKKG) has biased composition (basic residues). The RING-type; degenerate zinc finger occupies 679 to 718 (CCVCHDPPEDPVVTLCGHIFCYQCVSDYITGDEDTCPAPR). Positions 779 to 798 (NQGTSNSTQNGQMASSSQQP) are enriched in polar residues. The interval 779–808 (NQGTSNSTQNGQMASSSQQPNDDDDDDDDD) is disordered. Acidic residues predominate over residues 799–808 (NDDDDDDDDD). Residues 804–976 (DDDDDVTIVE…ATRLTVDDLK (173 aa)) form the Helicase C-terminal domain.

This sequence belongs to the SNF2/RAD54 helicase family. RAD16 subfamily. As to quaternary structure, interacts with SUVR2.

Its subcellular location is the nucleus. Functionally, probable helicase-like transcription factor involved in transcriptional gene silencing. Associates with SUVR2 and contributes to transcriptional gene silencing at RNA-directed DNA methylation (RdDM) target loci but also at RdDM-independent target loci. May be involved in nucleosome positioning to form ordered nucleosome arrays on chromatin. Associates with SUVR2 and functions redundantly with FRG1. Required for the efficient methylation of a broad range of RdDM target loci. The sequence is that of Helicase-like transcription factor CHR28 from Arabidopsis thaliana (Mouse-ear cress).